We begin with the raw amino-acid sequence, 201 residues long: Small ribosomal subunit protein uS4c (201 aa).

The segment at 17–44 is disordered; that stretch reads ALPGLTNKKPRNGSDLRNQSRSGKKSQY. The 61-residue stretch at 89 to 149 folds into the S4 RNA-binding domain; that stretch reads MRLDNILFRL…DEQKSRALIQ (61 aa).

This sequence belongs to the universal ribosomal protein uS4 family. Part of the 30S ribosomal subunit. Contacts protein S5. The interaction surface between S4 and S5 is involved in control of translational fidelity.

The protein resides in the plastid. Its subcellular location is the chloroplast. Functionally, one of the primary rRNA binding proteins, it binds directly to 16S rRNA where it nucleates assembly of the body of the 30S subunit. Its function is as follows. With S5 and S12 plays an important role in translational accuracy. The polypeptide is Small ribosomal subunit protein uS4c (rps4) (Nicotiana sylvestris (Wood tobacco)).